We begin with the raw amino-acid sequence, 310 residues long: Ribose-phosphate pyrophosphokinase (310 aa).

ATP-binding positions include 34–36 and 93–94; these read DQE and RQ. Mg(2+) contacts are provided by H127 and D167. The active site involves K190. Residues R192, D216, and 220-224 each bind D-ribose 5-phosphate; that span reads DSGGT.

The protein belongs to the ribose-phosphate pyrophosphokinase family. Class I subfamily. As to quaternary structure, homohexamer. Mg(2+) serves as cofactor.

The protein resides in the cytoplasm. The enzyme catalyses D-ribose 5-phosphate + ATP = 5-phospho-alpha-D-ribose 1-diphosphate + AMP + H(+). The protein operates within metabolic intermediate biosynthesis; 5-phospho-alpha-D-ribose 1-diphosphate biosynthesis; 5-phospho-alpha-D-ribose 1-diphosphate from D-ribose 5-phosphate (route I): step 1/1. Involved in the biosynthesis of the central metabolite phospho-alpha-D-ribosyl-1-pyrophosphate (PRPP) via the transfer of pyrophosphoryl group from ATP to 1-hydroxyl of ribose-5-phosphate (Rib-5-P). In Rhizobium meliloti (strain 1021) (Ensifer meliloti), this protein is Ribose-phosphate pyrophosphokinase.